A 206-amino-acid chain; its full sequence is Large ribosomal subunit protein uL3 (206 aa).

This sequence belongs to the universal ribosomal protein uL3 family. In terms of assembly, part of the 50S ribosomal subunit. Forms a cluster with proteins L14 and L19.

Functionally, one of the primary rRNA binding proteins, it binds directly near the 3'-end of the 23S rRNA, where it nucleates assembly of the 50S subunit. This is Large ribosomal subunit protein uL3 from Thermus thermophilus (strain ATCC BAA-163 / DSM 7039 / HB27).